Here is a 202-residue protein sequence, read N- to C-terminus: UPF0056 membrane protein CPn_1010/CP_0843/CPj1010/CpB1048 (202 aa).

6 helical membrane passes run 7 to 27 (LSLLFYVLFDSPGSIPVFVAL), 39 to 59 (VILRECLFALGALILFVTFGR), 61 to 81 (FFQFLDISLYAFQIIGGFLLF), 105 to 125 (PIFFPLAFPVITGPAVITALL), 137 to 157 (IIFTAMIIAWAFSLFTLLCSS), and 175 to 195 (FGIALLLMSVNLMLKGISIAF).

This sequence belongs to the UPF0056 (MarC) family.

The protein resides in the cell membrane. The protein is UPF0056 membrane protein CPn_1010/CP_0843/CPj1010/CpB1048 of Chlamydia pneumoniae (Chlamydophila pneumoniae).